The sequence spans 458 residues: tRNA-2-methylthio-N(6)-dimethylallyladenosine synthase (458 aa).

In terms of domain architecture, MTTase N-terminal spans 15 to 134 (KKVFIKTYGC…LPDLLEQTKQ (120 aa)). [4Fe-4S] cluster is bound by residues cysteine 24, cysteine 60, cysteine 97, cysteine 175, cysteine 179, and cysteine 182. One can recognise a Radical SAM core domain in the interval 161–393 (RKRGVSAFLT…QVLLLEQQNA (233 aa)). The TRAM domain occupies 396–457 (RSKIGQTTDV…SNSFVGEMTN (62 aa)).

This sequence belongs to the methylthiotransferase family. MiaB subfamily. As to quaternary structure, monomer. [4Fe-4S] cluster is required as a cofactor.

The protein resides in the cytoplasm. It catalyses the reaction N(6)-dimethylallyladenosine(37) in tRNA + (sulfur carrier)-SH + AH2 + 2 S-adenosyl-L-methionine = 2-methylsulfanyl-N(6)-dimethylallyladenosine(37) in tRNA + (sulfur carrier)-H + 5'-deoxyadenosine + L-methionine + A + S-adenosyl-L-homocysteine + 2 H(+). Its function is as follows. Catalyzes the methylthiolation of N6-(dimethylallyl)adenosine (i(6)A), leading to the formation of 2-methylthio-N6-(dimethylallyl)adenosine (ms(2)i(6)A) at position 37 in tRNAs that read codons beginning with uridine. The sequence is that of tRNA-2-methylthio-N(6)-dimethylallyladenosine synthase from Bartonella henselae (strain ATCC 49882 / DSM 28221 / CCUG 30454 / Houston 1) (Rochalimaea henselae).